A 296-amino-acid chain; its full sequence is 33 kDa chaperonin (296 aa).

2 cysteine pairs are disulfide-bonded: cysteine 238/cysteine 240 and cysteine 271/cysteine 274.

Belongs to the HSP33 family. Under oxidizing conditions two disulfide bonds are formed involving the reactive cysteines. Under reducing conditions zinc is bound to the reactive cysteines and the protein is inactive.

It is found in the cytoplasm. Its function is as follows. Redox regulated molecular chaperone. Protects both thermally unfolding and oxidatively damaged proteins from irreversible aggregation. Plays an important role in the bacterial defense system toward oxidative stress. This is 33 kDa chaperonin from Clostridium botulinum (strain 657 / Type Ba4).